A 346-amino-acid polypeptide reads, in one-letter code: Dehydrogenase orf1 (346 aa).

43-48 (VDYATQ) contributes to the NADP(+) binding site. 133–140 (LAFSTAIV) provides a ligand contact to substrate. Residues 170 to 173 (ATSV), 193 to 196 (SPHN), tyrosine 211, and 251 to 252 (LN) each bind NADP(+). Position 269–273 (269–273 (APPNV)) interacts with substrate. 336 to 337 (VS) provides a ligand contact to NADP(+).

The protein belongs to the zinc-containing alcohol dehydrogenase family.

It functions in the pathway secondary metabolite biosynthesis. Its function is as follows. Dehydrogenase; part of the gene cluster that mediates the biosynthesis of nigerpyrone and its derivatives carbonarone A and pestalamide A. The biosynthesis pathway begins with the polyketide assembly by epaA to form phenylacetyl triketide precursor from successive condensation of two malonyl-CoA, presumably with one phenylacetyl-CoA starter unit produced by the phenylacetyl-CoA ligase epaB. For the nigerpyrone biosynthesis, the reactive polyketide chain is released as an aldehyde through the R-domain. A nonenzymatic cyclization and dehydration may create nigerpyrone. For the biosynthesis of carbonarone A and pestalamide A, an extra methyl group is added through the C-methyltransferase domain. Several further steps involving the dehydrogenase orf1, the cytochrome P450 monooxygenase orf2 and the FAD-dependent monooxygenase orf3 are required to form a carbonarone A precursor which is converted to carbonarone A via cyclization. The O-acetyltransferase epaC could catalyze the transfer of 2-methylsuccinyl-CoA, a common intermediate in the ethylmalonyl-CoA pathway, to generate the final product pestalamide A. The chain is Dehydrogenase orf1 from Aspergillus niger (strain ATCC MYA-4892 / CBS 513.88 / FGSC A1513).